The sequence spans 204 residues: Methylthioribulose-1-phosphate dehydratase (204 aa).

Positions 94 and 96 each coordinate Zn(2+).

Belongs to the aldolase class II family. MtnB subfamily. Requires Zn(2+) as cofactor.

It catalyses the reaction 5-(methylsulfanyl)-D-ribulose 1-phosphate = 5-methylsulfanyl-2,3-dioxopentyl phosphate + H2O. The protein operates within amino-acid biosynthesis; L-methionine biosynthesis via salvage pathway; L-methionine from S-methyl-5-thio-alpha-D-ribose 1-phosphate: step 2/6. Functionally, catalyzes the dehydration of methylthioribulose-1-phosphate (MTRu-1-P) into 2,3-diketo-5-methylthiopentyl-1-phosphate (DK-MTP-1-P). The polypeptide is Methylthioribulose-1-phosphate dehydratase (Pseudomonas savastanoi pv. phaseolicola (strain 1448A / Race 6) (Pseudomonas syringae pv. phaseolicola (strain 1448A / Race 6))).